The chain runs to 193 residues: Potassium-transporting ATPase KdpC subunit (193 aa).

Residues 14–34 (ITFTFLVLCGLVYPLIVTGIA) form a helical membrane-spanning segment.

This sequence belongs to the KdpC family. As to quaternary structure, the system is composed of three essential subunits: KdpA, KdpB and KdpC.

Its subcellular location is the cell membrane. In terms of biological role, part of the high-affinity ATP-driven potassium transport (or Kdp) system, which catalyzes the hydrolysis of ATP coupled with the electrogenic transport of potassium into the cytoplasm. This subunit acts as a catalytic chaperone that increases the ATP-binding affinity of the ATP-hydrolyzing subunit KdpB by the formation of a transient KdpB/KdpC/ATP ternary complex. In Bacillus cereus (strain Q1), this protein is Potassium-transporting ATPase KdpC subunit.